We begin with the raw amino-acid sequence, 153 residues long: uncharacterized protein (153 aa).

3 helical membrane-spanning segments follow: residues 17–37, 44–64, and 118–138; these read ITLIGYWIASILAIIIYSMFF, FLLCLLLPTPIIWFNILIGMG, and FVFIVGLVLIVGFTIITTLII.

To M.jannaschii MJ0129 and MJ0554.

It is found in the cell membrane. This is an uncharacterized protein from Methanocaldococcus jannaschii (strain ATCC 43067 / DSM 2661 / JAL-1 / JCM 10045 / NBRC 100440) (Methanococcus jannaschii).